The following is a 124-amino-acid chain: Large ribosomal subunit protein bL19 (124 aa).

This sequence belongs to the bacterial ribosomal protein bL19 family.

This protein is located at the 30S-50S ribosomal subunit interface and may play a role in the structure and function of the aminoacyl-tRNA binding site. The sequence is that of Large ribosomal subunit protein bL19 from Cereibacter sphaeroides (strain ATCC 17029 / ATH 2.4.9) (Rhodobacter sphaeroides).